Consider the following 372-residue polypeptide: Glycerol-3-phosphate dehydrogenase [NAD(+)] (372 aa).

The span at Met1–Ser16 shows a compositional bias: polar residues. The tract at residues Met1–Ser23 is disordered. NAD(+) is bound by residues Gly29–Gly34, Phe60, Phe117, Lys140, and Ala173. Lys140 is a substrate binding site. The active-site Proton acceptor is the Lys225. 3 residues coordinate NAD(+): Arg289, Lys318, and Gln320. Arg289–Asn290 serves as a coordination point for substrate.

The protein belongs to the NAD-dependent glycerol-3-phosphate dehydrogenase family.

It carries out the reaction sn-glycerol 3-phosphate + NAD(+) = dihydroxyacetone phosphate + NADH + H(+). The polypeptide is Glycerol-3-phosphate dehydrogenase [NAD(+)] (GPDH) (Cuphea lanceolata (Cigar flower)).